A 67-amino-acid chain; its full sequence is Small ribosomal subunit protein eS17 (67 aa).

The protein belongs to the eukaryotic ribosomal protein eS17 family.

This chain is Small ribosomal subunit protein eS17, found in Pyrococcus horikoshii (strain ATCC 700860 / DSM 12428 / JCM 9974 / NBRC 100139 / OT-3).